Consider the following 591-residue polypeptide: MEAVTEGGWSSLPVALSPGVLRALQDLGFDRMTPVQSATIPLFMSNKDVAAEAVTGSGKTLAFVIPILEILLRREEKLKKMQVGAIIITPTRELAIQIDEVLTHFTKHFPKFSQILLIGGRNPMEDVEKFKEHGGNIIVATPGRLEDLFRRKADGLDLASCVKSLDVLVLDEADRLLDMGFESSLNAILAFLPKQRRTGLFSATQTQEVENLVRAGLRNPVRISVKEKGVAATNTQKTPTRLENYYMICKADEKFNQLVHFLRQHKQEKHLVFFSTCACVEYYGKALESLIKQVKIMCIHGKMKHKRNKIFTEFRRLAGGILVCTDVMARGIDIPEVHWVLQYDPPSSASAFVHRCGRTARIGNAGSALVFLLPMEESYINFLSINQKCPMQEMQPQRNVLDLLPKLKSMALADRAVFEKGMKAFVSYIQAYAKHECNLIFRIKDLDFASLAKGFALLKMPKMPELRGKCFPDFTPVTVNTDSIPFKDKNREKQRQKQLEQQRKEREESEGKKKFIKNKSWSKQKAKREKKRKLTAKRKREEGSDMEDEDMEELLNDTRLLKRLKKGKISEEEFEKRLTGSQSKFKEAAAD.

The short motif at 9 to 37 (WSSLPVALSPGVLRALQDLGFDRMTPVQS) is the Q motif element. Positions 40 to 223 (IPLFMSNKDV…RAGLRNPVRI (184 aa)) constitute a Helicase ATP-binding domain. 53 to 60 (AVTGSGKT) is an ATP binding site. The DEAD box signature appears at 171-174 (DEAD). Residues 254-402 (KFNQLVHFLR…EMQPQRNVLD (149 aa)) form the Helicase C-terminal domain. Disordered stretches follow at residues 482 to 559 (DSIP…NDTR) and 571 to 591 (EEEF…AAAD). The segment covering 485–513 (PFKDKNREKQRQKQLEQQRKEREESEGKK) has biased composition (basic and acidic residues). Residues 486–542 (FKDKNREKQRQKQLEQQRKEREESEGKKKFIKNKSWSKQKAKREKKRKLTAKRKREE) adopt a coiled-coil conformation. Basic residues predominate over residues 514–538 (KFIKNKSWSKQKAKREKKRKLTAKR). Residues 533–562 (KLTAKRKREEGSDMEDEDMEELLNDTRLLK) form an important for nuclear localization region. The span at 544–555 (SDMEDEDMEELL) shows a compositional bias: acidic residues.

The protein belongs to the DEAD box helicase family. DDX55/SPB4 subfamily. Interacts with 28S rRNA. Interacts with double-stranded RNA substrates in vitro; the interaction stimulates ATPase activity.

The protein localises to the nucleus. Its subcellular location is the nucleoplasm. The enzyme catalyses ATP + H2O = ADP + phosphate + H(+). In terms of biological role, probable ATP-binding RNA helicase. Has ATPase activity and is involved in the maturation of precursor large subunit rRNAs. This Gallus gallus (Chicken) protein is ATP-dependent RNA helicase DDX55 (DDX55).